The chain runs to 49 residues: Large ribosomal subunit protein bL33B (49 aa).

It belongs to the bacterial ribosomal protein bL33 family.

The polypeptide is Large ribosomal subunit protein bL33B (Exiguobacterium sibiricum (strain DSM 17290 / CCUG 55495 / CIP 109462 / JCM 13490 / 255-15)).